We begin with the raw amino-acid sequence, 75 residues long: U6-lycotoxin-Ls1d (75 aa).

The signal sequence occupies residues 1 to 21; that stretch reads MKLLLFTALVLVVISLVEVEA. Residues 22–25 constitute a propeptide that is removed on maturation; it reads ENER.

This sequence belongs to the neurotoxin 19 (CSTX) family. 06 (U6-Lctx) subfamily. Contains 4 disulfide bonds. Expressed by the venom gland.

Its subcellular location is the secreted. In Lycosa singoriensis (Wolf spider), this protein is U6-lycotoxin-Ls1d.